Reading from the N-terminus, the 221-residue chain is GTP-binding nuclear protein Ran/TC4 (221 aa).

Residues 10-174 (DYPSFKLVIV…LYLARKLAGD (165 aa)) form the Small GTPase Ran-type domain. GTP is bound at residue 21-28 (DGGTGKTT). A switch-I region spans residues 40–48 (KKYEPTIGV). GTP is bound by residues Gly71, 125-128 (NKVD), and 153-155 (SAK). A switch-II region spans residues 71–87 (GQEKFGGLRDGYYIHGQ).

Belongs to the small GTPase superfamily. Ran family. Found in a nuclear export complex with RanGTP, exportin and pre-miRNA.

The protein resides in the nucleus. GTP-binding protein involved in nucleocytoplasmic transport. Required for the import of protein into the nucleus and also for RNA export. Involved in chromatin condensation and control of cell cycle. The protein is GTP-binding nuclear protein Ran/TC4 of Vicia faba (Broad bean).